Reading from the N-terminus, the 726-residue chain is E3 SUMO-protein ligase SIZ2 (726 aa).

The region spanning 43-77 is the SAP domain; the sequence is MEQLKVLELKQICKSLDLSITGKKAVLQDRIKQFL. Residues 139 to 291 enclose the PINIT domain; that stretch reads TALPPYSQQQ…SISCFIVEVF (153 aa). Residues 323–408 form an SP-RING-type zinc finger; sequence DDDDIITTST…IQNCNEDVEQ (86 aa). Zn(2+) is bound by residues C354, H356, C377, and C380. The tract at residues 507 to 533 is disordered; the sequence is PSESEGSSDYNPNHTSTPKGSPTMDQD. Positions 510–533 are enriched in polar residues; that stretch reads SEGSSDYNPNHTSTPKGSPTMDQD.

Belongs to the PIAS family. As to quaternary structure, interacts with CDC12. Autosumoylated upon ethanol stress.

The protein localises to the nucleus. It functions in the pathway protein modification; protein sumoylation. Functionally, may act as an E3 ligase mediating SUMO/Smt3 attachment to septins. May be involved in chromosome maintenance. This Saccharomyces cerevisiae (strain ATCC 204508 / S288c) (Baker's yeast) protein is E3 SUMO-protein ligase SIZ2 (NFI1).